The chain runs to 226 residues: Small ribosomal subunit protein uS5 (226 aa).

The segment covering 1–18 (MAAPQRSRTTGAPSSGGP) has biased composition (polar residues). The tract at residues 1–45 (MAAPQRSRTTGAPSSGGPSENERGRGGDRRGGDRRGGDRRGGDDR) is disordered. A compositionally biased stretch (basic and acidic residues) spans 20 to 45 (ENERGRGGDRRGGDRRGGDRRGGDDR). One can recognise an S5 DRBM domain in the interval 48-111 (FVERVVTINR…EEAKKNFFRV (64 aa)).

The protein belongs to the universal ribosomal protein uS5 family. As to quaternary structure, part of the 30S ribosomal subunit. Contacts proteins S4 and S8.

With S4 and S12 plays an important role in translational accuracy. Its function is as follows. Located at the back of the 30S subunit body where it stabilizes the conformation of the head with respect to the body. The polypeptide is Small ribosomal subunit protein uS5 (Beutenbergia cavernae (strain ATCC BAA-8 / DSM 12333 / CCUG 43141 / JCM 11478 / NBRC 16432 / NCIMB 13614 / HKI 0122)).